A 143-amino-acid chain; its full sequence is UPF0292 protein Mbar_A0484 (143 aa).

In terms of domain architecture, Toprim spans 28-109 (GAIIIVEGKR…KPELEIRNKL (82 aa)). Mg(2+) is bound by residues Glu34, Asp78, and Asp80.

Belongs to the UPF0292 family. Mg(2+) is required as a cofactor.

This is UPF0292 protein Mbar_A0484 from Methanosarcina barkeri (strain Fusaro / DSM 804).